We begin with the raw amino-acid sequence, 335 residues long: Basic endochitinase B (335 aa).

A signal peptide spans 1–33 (MPPQKENHRTLNKMKTNLFLFLIFSLLLSLSSA). Positions 34–75 (EQCGRQAGGALCPNGLCCSEFGWCGNTEPYCKQPGCQSQCTP) constitute a Chitin-binding type-1 domain. 7 disulfide bridges follow: Cys-36-Cys-51, Cys-45-Cys-57, Cys-50-Cys-64, Cys-69-Cys-73, Cys-107-Cys-169, Cys-181-Cys-189, and Cys-288-Cys-320. Glu-151 functions as the Proton donor in the catalytic mechanism. A propeptide spans 329 to 335 (GLLEAAI) (removed in mature form). Residues 329–335 (GLLEAAI) carry the Vacuolar targeting signal motif.

Belongs to the glycosyl hydrolase 19 family. Chitinase class I subfamily. As to expression, high constitutive level in roots with lower levels in leaves and flowering shoots.

The protein resides in the vacuole. It carries out the reaction Random endo-hydrolysis of N-acetyl-beta-D-glucosaminide (1-&gt;4)-beta-linkages in chitin and chitodextrins.. Defense against chitin-containing fungal pathogens. Seems particularly implicated in resistance to jasmonate-inducing pathogens such as A.brassicicola. In vitro antifungal activity against T.reesei, but not against A.solani, F.oxysporum, S.sclerotiorum, G.graminis and P.megasperma. The sequence is that of Basic endochitinase B (CHI-B) from Arabidopsis thaliana (Mouse-ear cress).